Reading from the N-terminus, the 147-residue chain is Ribonuclease 4 (147 aa).

Residues 1 to 28 (MALQRTHSLLLLLLLTLLGLGLVQPSYG) form the signal peptide. Pyrrolidone carboxylic acid is present on Q29. R35, H40, K68, N71, and T72 together coordinate dUMP. The active-site Proton acceptor is H40. 4 cysteine pairs are disulfide-bonded: C53/C109, C67/C120, C85/C135, and C92/C99. H144 (proton donor) is an active-site residue. A dUMP-binding site is contributed by F145.

This sequence belongs to the pancreatic ribonuclease family. As to expression, expressed in the cortical and medullary tubules of the kidney, and in the transitional epithelium of the urinary bladder (at protein level).

It is found in the secreted. Functionally, cleaves preferentially after uridine bases. Has antimicrobial activity against uropathogenic E.coli (UPEC). Probably contributes to urinary tract sterility. This is Ribonuclease 4 (RNASE4) from Homo sapiens (Human).